The primary structure comprises 320 residues: L-lactate dehydrogenase 2 (320 aa).

NAD(+) contacts are provided by residues Ala18–Val19, Asp40, and Arg45. Substrate contacts are provided by residues Gln88, Arg94, and Asn126–Asp129. Residues Ile124 to Asn126 and Ser149 contribute to the NAD(+) site. Residue Asp154 to Arg157 coordinates substrate. Beta-D-fructose 1,6-bisphosphate contacts are provided by residues Arg159 and Lys171–Tyr176. His181 functions as the Proton acceptor in the catalytic mechanism. At Tyr228 the chain carries Phosphotyrosine. Thr237 lines the substrate pocket.

It belongs to the LDH/MDH superfamily. LDH family. In terms of assembly, homotetramer.

It is found in the cytoplasm. It catalyses the reaction (S)-lactate + NAD(+) = pyruvate + NADH + H(+). It functions in the pathway fermentation; pyruvate fermentation to lactate; (S)-lactate from pyruvate: step 1/1. With respect to regulation, allosterically activated by fructose 1,6-bisphosphate (FBP). Its function is as follows. Catalyzes the conversion of lactate to pyruvate. This chain is L-lactate dehydrogenase 2, found in Bifidobacterium longum subsp. longum (strain ATCC 15707 / DSM 20219 / JCM 1217 / NCTC 11818 / E194b).